Consider the following 140-residue polypeptide: RxLR effector protein CRE2 (140 aa).

A signal peptide spans 1-24 (MRWLIWTAVSTLVMLLAMTEVSAS). Residues 56–72 (RSLRDKSSSLITESEER) carry the RxLR-dEER motif.

Belongs to the RxLR effector family.

It localises to the secreted. The protein localises to the host cell. Effector that is involved in host plant infection. Contributes to virulence during the early infection stage, by inhibiting plant defense responses induced by both PAMP-triggered immunity (PTI) and effector-triggered immunity (ETI). This chain is RxLR effector protein CRE2, found in Phytophthora infestans (strain T30-4) (Potato late blight agent).